A 29-amino-acid chain; its full sequence is MTKNKFVLLRYLCLFCTNIDQIDFNSVLK.

The protein localises to the plastid. The protein resides in the chloroplast. This is an uncharacterized protein from Trieres chinensis (Marine centric diatom).